A 418-amino-acid polypeptide reads, in one-letter code: Cell division protein FtsA (418 aa).

The protein belongs to the FtsA/MreB family. In terms of assembly, self-interacts. Interacts with FtsZ.

Its subcellular location is the cell inner membrane. In terms of biological role, cell division protein that is involved in the assembly of the Z ring. May serve as a membrane anchor for the Z ring. The protein is Cell division protein FtsA of Buchnera aphidicola subsp. Schizaphis graminum (strain Sg).